Reading from the N-terminus, the 915-residue chain is MATNFLTKLFGSRNDRLLKQYRKTVVRINAMEPDYEKLSDEALRAKTQEFKERVAKGESLDDLLPEAFAVVREGSKRVMKMRHFDVQLLGGMALHYGKIAEMRTGEGKTLTATLPVYLNALSGNGVHVVTVNDYLANRDATWMAKLYNFLGLSVGINLPNMPREEKQAAYNSDITYGTNNEYGFDYLRDNMVYESGDRVQRVLNYAIVDEVDSILIDEARTPLIISGQAEDHTAMYVAMNKIVPNLVRQEGEADPRTGEGVTKPGDFTVDEKSHQVFLTDQGYEAAERLLGHAGMIAEGASLYDPANITLVHHLYAALRANNLYHRDQHYVVQNGEIVIVDEFTGRLMAGRRWSDGLHQAVEAKEGVTIQAENQTMASITFQNYFRLYGKLAGMTGTADTEAYEFQEIYGLETMVIPPNRPSKRDDQLDRVYKTTREKYEAAIRDIRECYERGQPVLVGTTSIENSEIIDELLNKENLPHQVLNAKQHEREADIVAQAGRPGMITIATNMAGRGTDIVLGGNIEKQVAAVEADESLSEAERQQRIEQMRADWKIEHDKVSALGGLRIIATERHESRRIDNQLRGRSGRQGDPGSSRFYLSLDDALMRIFAGDRVRAIMDRLKMPDGEAIEAGIVTRSIEGAQRKVEARNFDIRKQLLEYDDVSNDQRKVIYQQRNEILDASDLYEMITVMRDDVVSDLVRQYVPAESMEEQWDLAGLEKALESEWRIQLPLQSQVQSAHAITDEEILEKVLQAAREVFDAKVELIGRENFTQFQRAVLLQSFDTNWRDHLSALDYLRQGIHLRGYAQKQPKQEYKREAFELFRQLIDQVKTEVTRVLMTVQVQSREQVEQATEALEQRSAHSLEHMTYGAPSDGDIGGSVEDEPLELPEGARVGRNDPCPCGSGKKYKQCHGKLS.

Residues Q87, 105–109 (GEGKT), and D516 contribute to the ATP site. The segment at 866–915 (MTYGAPSDGDIGGSVEDEPLELPEGARVGRNDPCPCGSGKKYKQCHGKLS) is disordered. The Zn(2+) site is built by C899, C901, C910, and H911. Residues 905–915 (KKYKQCHGKLS) show a composition bias toward basic residues.

It belongs to the SecA family. In terms of assembly, monomer and homodimer. Part of the essential Sec protein translocation apparatus which comprises SecA, SecYEG and auxiliary proteins SecDF-YajC and YidC. Zn(2+) serves as cofactor.

The protein localises to the cell inner membrane. Its subcellular location is the cytoplasm. It catalyses the reaction ATP + H2O + cellular proteinSide 1 = ADP + phosphate + cellular proteinSide 2.. Its function is as follows. Part of the Sec protein translocase complex. Interacts with the SecYEG preprotein conducting channel. Has a central role in coupling the hydrolysis of ATP to the transfer of proteins into and across the cell membrane, serving both as a receptor for the preprotein-SecB complex and as an ATP-driven molecular motor driving the stepwise translocation of polypeptide chains across the membrane. This Delftia acidovorans (strain DSM 14801 / SPH-1) protein is Protein translocase subunit SecA.